We begin with the raw amino-acid sequence, 350 residues long: Histidinol-phosphate aminotransferase (350 aa).

At Lys210 the chain carries N6-(pyridoxal phosphate)lysine.

It belongs to the class-II pyridoxal-phosphate-dependent aminotransferase family. Histidinol-phosphate aminotransferase subfamily. As to quaternary structure, homodimer. Pyridoxal 5'-phosphate is required as a cofactor.

The enzyme catalyses L-histidinol phosphate + 2-oxoglutarate = 3-(imidazol-4-yl)-2-oxopropyl phosphate + L-glutamate. It participates in amino-acid biosynthesis; L-histidine biosynthesis; L-histidine from 5-phospho-alpha-D-ribose 1-diphosphate: step 7/9. The protein is Histidinol-phosphate aminotransferase of Pseudomonas syringae pv. syringae (strain B728a).